We begin with the raw amino-acid sequence, 340 residues long: uncharacterized protein (340 aa).

Residues 6-70 (KYEKSSARCW…PQCLTAYRIA (65 aa)) form an RING-CH-type zinc finger. Residues Cys14, Cys17, Cys37, Cys39, His44, Cys47, Cys60, and Cys63 each contribute to the Zn(2+) site. Transmembrane regions (helical) follow at residues 249–269 (EFWI…TKIL), 274–294 (PILL…GNFT), and 300–320 (IIGA…FIAW).

It is found in the membrane. This is an uncharacterized protein from Schizosaccharomyces pombe (strain 972 / ATCC 24843) (Fission yeast).